The following is a 153-amino-acid chain: MATRRGRRALLIAGGVGLLALAAALVLNALRSNLVFFFSPTQVHAHEAPSSGSFRVGGLVRAGSVERAADGLTLRFVVTDTVREVPVAYTGLLPALFREGKGVVVAGNMGADGVFRATEVLAKHDENYMPPQAADALRQAGALPSATLQTEAR.

Residues 1–8 (MATRRGRR) lie on the Cytoplasmic side of the membrane. Residues 9-29 (ALLIAGGVGLLALAAALVLNA) traverse the membrane as a helical; Signal-anchor for type II membrane protein segment. Topologically, residues 30–153 (LRSNLVFFFS…PSATLQTEAR (124 aa)) are periplasmic. Heme-binding residues include His-124 and Tyr-128.

It belongs to the CcmE/CycJ family.

It localises to the cell inner membrane. Heme chaperone required for the biogenesis of c-type cytochromes. Transiently binds heme delivered by CcmC and transfers the heme to apo-cytochromes in a process facilitated by CcmF and CcmH. The sequence is that of Cytochrome c-type biogenesis protein CcmE from Bordetella bronchiseptica (strain ATCC BAA-588 / NCTC 13252 / RB50) (Alcaligenes bronchisepticus).